A 590-amino-acid polypeptide reads, in one-letter code: Negative elongation factor D (590 aa).

The tract at residues 15–43 is disordered; the sequence is FGSAAEWGDEADGGQQEDDYGEGEDDAEV. A compositionally biased stretch (acidic residues) spans 21–43; that stretch reads WGDEADGGQQEDDYGEGEDDAEV.

This sequence belongs to the NELF-D family. As to quaternary structure, the NELF complex is composed of NELFA, NELFB, NELFCD and NELFE; NELFA and NELFCD form a stable subcomplex that binds primarily through NELFCD to the N-terminus of NELFB. Binds RNA which may help to stabilize the NELF complex on nucleic acid. In vitro, the NELFA:NELFCD subcomplex binds to ssDNA and ssRNA in a sequence- and structure-dependent manner. Interacts with ARAF1. Interacts with PCF11. Interacts with NELFB. Interacts with KAT8.

It localises to the nucleus. In terms of biological role, essential component of the NELF complex, a complex that negatively regulates the elongation of transcription by RNA polymerase II. The NELF complex, which acts via an association with the DSIF complex and causes transcriptional pausing, is counteracted by the P-TEFb kinase complex. This Sus scrofa (Pig) protein is Negative elongation factor D (NELFCD).